Here is a 545-residue protein sequence, read N- to C-terminus: Zinc finger protein 697 (545 aa).

A disordered region spans residues 1–143 (MKQEDNQGVC…EQPAPPVLPW (143 aa)). Lysine 2 participates in a covalent cross-link: Glycyl lysine isopeptide (Lys-Gly) (interchain with G-Cter in SUMO2). Residues 23–36 (DFEDSEDREGDPEE) are compositionally biased toward acidic residues. Over residues 45–55 (DTNKREGHPEP) the composition is skewed to basic and acidic residues. Composition is skewed to acidic residues over residues 79–94 (LSEE…EDDQ) and 118–135 (EDDD…EEEQ). 11 consecutive C2H2-type zinc fingers follow at residues 189–211 (TICP…QRIH), 261–283 (FRCG…LRLH), 289–311 (NLCA…RRLH), 317–339 (YPCP…RRAH), 353–375 (FACG…QRIH), 381–403 (HGCG…QRVH), 409–431 (YMCS…KRTH), 437–459 (YVCR…LRVH), 465–487 (FRCG…QRTH), 493–515 (YTCI…RRIH), and 521–543 (HKCA…QKLH).

This sequence belongs to the krueppel C2H2-type zinc-finger protein family.

Its subcellular location is the nucleus. Its function is as follows. RNA-interacting protein with a high number of miRNA targets. Acts as a damage-induced regulator of muscle remodeling by mediating the interferon gamma response in muscle cells. This Homo sapiens (Human) protein is Zinc finger protein 697.